Reading from the N-terminus, the 251-residue chain is Hydroxyacylglutathione hydrolase (251 aa).

Residues histidine 53, histidine 55, aspartate 57, histidine 58, histidine 110, aspartate 127, and histidine 165 each contribute to the Zn(2+) site.

This sequence belongs to the metallo-beta-lactamase superfamily. Glyoxalase II family. In terms of assembly, monomer. It depends on Zn(2+) as a cofactor.

The catalysed reaction is an S-(2-hydroxyacyl)glutathione + H2O = a 2-hydroxy carboxylate + glutathione + H(+). It functions in the pathway secondary metabolite metabolism; methylglyoxal degradation; (R)-lactate from methylglyoxal: step 2/2. Its function is as follows. Thiolesterase that catalyzes the hydrolysis of S-D-lactoyl-glutathione to form glutathione and D-lactic acid. The sequence is that of Hydroxyacylglutathione hydrolase from Escherichia coli O9:H4 (strain HS).